Consider the following 165-residue polypeptide: Ribosome maturation factor RimM (165 aa).

Residues 94–165 (EDEFYIADLN…YVVLNYQREI (72 aa)) form the PRC barrel domain.

This sequence belongs to the RimM family. In terms of assembly, binds ribosomal protein uS19.

Its subcellular location is the cytoplasm. In terms of biological role, an accessory protein needed during the final step in the assembly of 30S ribosomal subunit, possibly for assembly of the head region. Essential for efficient processing of 16S rRNA. May be needed both before and after RbfA during the maturation of 16S rRNA. It has affinity for free ribosomal 30S subunits but not for 70S ribosomes. In Rickettsia felis (strain ATCC VR-1525 / URRWXCal2) (Rickettsia azadi), this protein is Ribosome maturation factor RimM.